We begin with the raw amino-acid sequence, 204 residues long: uncharacterized protein (204 aa).

The signal sequence occupies residues 1–17; it reads MKRLVTGLLALSLFLAA. Residues 17 to 102 are disordered; it reads ACGQDSDQQK…NQSSNNQKSS (86 aa). A lipid anchor (N-palmitoyl cysteine) is attached at Cys-18. Residue Cys-18 is the site of S-diacylglycerol cysteine attachment. Residues 23-70 are compositionally biased toward basic and acidic residues; the sequence is DQQKDSNKEKDDKAKTEQQDKKTNDSSKDKKDNKDDSKDVNKDNKDNS. Low complexity predominate over residues 71 to 102; sequence ANDNQQQSNSNATNNDQNQTNNNQSSNNQKSS.

It localises to the cell membrane. This is an uncharacterized protein from Staphylococcus aureus (strain Mu50 / ATCC 700699).